A 201-amino-acid chain; its full sequence is MGAYKYVAEMERRKQSDVLRFLLRVRCWEYRQLNVIHRASRPSRPDKARRLGYKAKQGYVIYRVRVRRGNRKRPAPKGATFGKPVNQGINQLKFQRSLRSTAEERVARRCGGLRILNSYWITKTVSTSTLKSSLSTPSTRLSVVMPVSTGSATPYTSAENLAVSHPLGKQNRGLGRGSKHTKSPNHAFWKRTNKLFLRRYR.

This sequence belongs to the eukaryotic ribosomal protein eL15 family.

The chain is Large ribosomal subunit protein eL15 (RPL15) from Quercus suber (Cork oak).